A 149-amino-acid chain; its full sequence is MHCPFCSATDTKVIDSRLVSDGHQVRRRRQCLACSERFTTFESAELVMPKVIKSNGNREPFDEDKLSGGLYRSLEKRPVSADLVELALNTIKSQLRATGEREVPSDMIGNLVMDQLKELDKVAYIRFASVYRSFEDIKEFGEEIAKLEK.

Residues 3–34 (CPFCSATDTKVIDSRLVSDGHQVRRRRQCLAC) fold into a zinc finger. One can recognise an ATP-cone domain in the interval 49–139 (PKVIKSNGNR…VYRSFEDIKE (91 aa)).

This sequence belongs to the NrdR family. Zn(2+) serves as cofactor.

Functionally, negatively regulates transcription of bacterial ribonucleotide reductase nrd genes and operons by binding to NrdR-boxes. The protein is Transcriptional repressor NrdR of Aliivibrio fischeri (strain ATCC 700601 / ES114) (Vibrio fischeri).